A 2359-amino-acid polypeptide reads, in one-letter code: Low-reducing polyketide synthase drtA (2359 aa).

Residues 17–444 (LPPIAVVSFA…GANAHVIVEE (428 aa)) enclose the Ketosynthase family 3 (KS3) domain. Residues Cys190, His327, and His367 each act as for beta-ketoacyl synthase activity in the active site. The segment at 556–868 (VFTGQGSQWP…QYLAALDRGK (313 aa)) is malonyl-CoA:ACP transacylase (MAT) domain. Catalysis depends on Ser648, which acts as the For malonyltransferase activity. The N-terminal hotdog fold stretch occupies residues 940–1077 (HELLGRKILG…GRISVRQVAA (138 aa)). The segment at 940–1245 (HELLGRKILG…FKGLRFSELN (306 aa)) is dehydratase (DH) domain. Residues 940–1250 (HELLGRKILG…FSELNMGDGV (311 aa)) enclose the PKS/mFAS DH domain. The active-site Proton acceptor; for dehydratase activity is His972. A C-terminal hotdog fold region spans residues 1089–1250 (AYSESAEHWY…FSELNMGDGV (162 aa)). The active-site Proton donor; for dehydratase activity is the Asp1153. Positions 1659–1970 (GSFDSLELYE…TGRHVGKVVV (312 aa)) are enoyl reductase (ER) domain. The ketoreductase (KR) domain stretch occupies residues 1995-2172 (SYLITGGLHG…LSLDIGAVQD (178 aa)). Residues 2280–2356 (ALTEAAIELF…ALCSKLITRL (77 aa)) form the Carrier domain. Position 2316 is an O-(pantetheine 4'-phosphoryl)serine (Ser2316).

It functions in the pathway secondary metabolite biosynthesis; terpenoid biosynthesis. Its function is as follows. Low-reducing polyketide synthase; part of the gene cluster that mediates the biosynthesis of various drimane-type sesquiterpene esters, compounds that exhibit diverse biological activities and are widely present in eukaryotes. The pathway begins with the synthesis of the backbone drimenol by the terpene cyclase drtB using farnesyl pyrophosphate (FPP) as substrate. The cytochrome P450 monooxygenase drtD is then responsible for the hydroxylations at C-6, C-9 and C-12, as well as the oxidation of hydroxyl groups at C-6 and C-11 to a ketone and an aldehyde, respectively. Then, the biosynthesis can go in two directions, either the hydroxylated drimenol is further hydroxylated at C-2 and C-3 by an enzyme(s) not associated with the drt cluster, or the FAD-binding oxidoreductase drtC further oxidizes C-11 or C-12 to form the butyrolactone ring. DrtB, drtD and drtC are solely responsible for the formation of the different drimane structures observed during drimane sesquiterpenes biosynthesis. The polyketide synthase drtA synthesizes different lengths (C6 and C8) of PKS chains, which are then oxidized to varying degrees by the short-chain dehydrogenase drtF. Finally, these PKS chains are transferred onto drimane sesquiterpenes by the acyltransferase drtE, forming the sesquiterpene esters. In addition to the different fatty acyl-CoA chains produced by drtA, drtE is also able to use cinnamoyl-CoA as a substrate. In Aspergillus calidoustus, this protein is Low-reducing polyketide synthase drtA.